Consider the following 476-residue polypeptide: MGTTSSQSKTLYQKLYDAHIVHEAPNETPLLYIDRHLVHEVTSPQAFDGLRAMGRPVRQPGKTFATMDHNVSTQTKDINASGEMARIQMQELIKNCAEFGVSLYDLNHPFQGIVHVIGPEQGMTLPGMTIVCGDSHTATHGAFGSLAFGIGTSEVEHVLATQTLKQGRAKTMRIEVNGTVGAGITAKDIVLAIIGKTGSAGGTGHVVEFCGSAIEALSMEGRMTLCNMAIEMGAKAGLVAPDDTTFAYLKGRQFAPTGEQWEQGVAYWRTLKSDADAQFDTIVTLDAADIAPQVTWGTNPGQVIAVNQIIPAPESFSDPVERASAEKALAYMDLRPGIKLTEVAIDKVFIGSCTNSRIEDLRAAAAIAQGRKVAKGVQAIVVPGSGPVKAQAEAEGLDKIFIAAGFEWRLPGCSMCLAMNNDRLEPGERCASTSNRNFEGRQGRGGRTHLVSPAMAAAAAVSGHFADVRELSATTH.

3 residues coordinate [4Fe-4S] cluster: Cys-353, Cys-413, and Cys-416.

This sequence belongs to the aconitase/IPM isomerase family. LeuC type 1 subfamily. Heterodimer of LeuC and LeuD. [4Fe-4S] cluster serves as cofactor.

It catalyses the reaction (2R,3S)-3-isopropylmalate = (2S)-2-isopropylmalate. It participates in amino-acid biosynthesis; L-leucine biosynthesis; L-leucine from 3-methyl-2-oxobutanoate: step 2/4. In terms of biological role, catalyzes the isomerization between 2-isopropylmalate and 3-isopropylmalate, via the formation of 2-isopropylmaleate. The chain is 3-isopropylmalate dehydratase large subunit from Yersinia pseudotuberculosis serotype O:1b (strain IP 31758).